We begin with the raw amino-acid sequence, 119 residues long: Fluoride-specific ion channel FluC (119 aa).

4 consecutive transmembrane segments (helical) span residues 5-25 (IIPLSIGAALGATARWLLNLA), 30-50 (IPPATGNLFANWIGAFLIGIF), 59-79 (WKLLLITGFLGSLTTLSGFSL), and 97-117 (IFLHTAGSLLLTWLGLKIGAA). The Na(+) site is built by Gly69 and Thr72.

Belongs to the fluoride channel Fluc/FEX (TC 1.A.43) family.

It is found in the cell inner membrane. The enzyme catalyses fluoride(in) = fluoride(out). With respect to regulation, na(+) is not transported, but it plays an essential structural role and its presence is essential for fluoride channel function. Its function is as follows. Fluoride-specific ion channel. Important for reducing fluoride concentration in the cell, thus reducing its toxicity. This is Fluoride-specific ion channel FluC from Neisseria meningitidis serogroup B (strain ATCC BAA-335 / MC58).